Here is a 59-residue protein sequence, read N- to C-terminus: Chromatin protein Cren7 (59 aa).

The protein belongs to the Cren7 family. In terms of assembly, monomer. Methylated at multiple sites, to varying extents.

Its subcellular location is the chromosome. The protein resides in the cytoplasm. A chromatin protein, binds double-stranded DNA without sequence specificity. Constrains negative DNA supercoils. This chain is Chromatin protein Cren7, found in Pyrobaculum aerophilum (strain ATCC 51768 / DSM 7523 / JCM 9630 / CIP 104966 / NBRC 100827 / IM2).